Reading from the N-terminus, the 447-residue chain is NADH-ubiquinone oxidoreductase chain 4 (447 aa).

Helical transmembrane passes span Ile28–Ile48, Met56–Ser76, Phe89–Val109, Phe110–Trp130, Val141–Ile161, Leu183–Leu203, Pro213–Leu233, Tyr246–Leu266, Ala273–Met293, Leu298–Leu318, Leu331–Leu351, Ile374–Ala394, and Tyr409–Leu431.

This sequence belongs to the complex I subunit 4 family.

The protein localises to the mitochondrion membrane. The enzyme catalyses a ubiquinone + NADH + 5 H(+)(in) = a ubiquinol + NAD(+) + 4 H(+)(out). Functionally, core subunit of the mitochondrial membrane respiratory chain NADH dehydrogenase (Complex I) that is believed to belong to the minimal assembly required for catalysis. Complex I functions in the transfer of electrons from NADH to the respiratory chain. The immediate electron acceptor for the enzyme is believed to be ubiquinone. This Anopheles gambiae (African malaria mosquito) protein is NADH-ubiquinone oxidoreductase chain 4 (mt:ND4).